We begin with the raw amino-acid sequence, 200 residues long: Systemin (200 aa).

Positions 1 to 33 (MGTPSYDIKNKGDDMQEEPKVKLHHEKGGDEKE) are disordered. 2 propeptides span residues 1 to 178 (MGTP…REDL) and 197 to 200 (NNKL). Residues 3–8 (TPSYDI) form a 1; truncated repeat. The span at 8-33 (IKNKGDDMQEEPKVKLHHEKGGDEKE) shows a compositional bias: basic and acidic residues. Tandem repeats lie at residues 37 to 45 (EKETPSQDI), 80 to 88 (EKETISQYI), 117 to 125 (EKETPSQDI), and 145 to 153 (DKETPSQDI). 2 disordered regions span residues 106–159 (EEEE…MEGE) and 178–200 (LAVQ…NNKL). Basic and acidic residues-rich tracts occupy residues 111–140 (EKEK…KVEH) and 146–158 (KETP…KMEG).

As to expression, all organs except the roots. Transported out of wounds to distal tissues.

It is found in the cytoplasm. In terms of biological role, activates a lipid-based signal transduction pathway in which linolenic acid is converted to jasmonic acid, a potent activator of defense gene transcription, including proteinase inhibitor. This Solanum lycopersicum (Tomato) protein is Systemin.